We begin with the raw amino-acid sequence, 288 residues long: Energy-coupling factor transporter ATP-binding protein EcfA2 (288 aa).

In terms of domain architecture, ABC transporter spans 2 to 244 (IKFEKVNYTY…VDFLKAHELG (243 aa)). 39–46 (GHTGSGKS) provides a ligand contact to ATP.

Belongs to the ABC transporter superfamily. Energy-coupling factor EcfA family. As to quaternary structure, forms a stable energy-coupling factor (ECF) transporter complex composed of 2 membrane-embedded substrate-binding proteins (S component), 2 ATP-binding proteins (A component) and 2 transmembrane proteins (T component).

Its subcellular location is the cell membrane. ATP-binding (A) component of a common energy-coupling factor (ECF) ABC-transporter complex. Unlike classic ABC transporters this ECF transporter provides the energy necessary to transport a number of different substrates. The polypeptide is Energy-coupling factor transporter ATP-binding protein EcfA2 (Lactococcus lactis subsp. lactis (strain IL1403) (Streptococcus lactis)).